The sequence spans 780 residues: Replication origin-binding protein (780 aa).

In terms of domain architecture, Helicase ATP-binding spans 39 to 195 (SFENVRQPIK…AAFKPDTQIA (157 aa)). Residue 52-59 (AAMGSGKT) coordinates ATP.

It belongs to the herpesviridae OriBP family.

Probably involved in DNA replication. Binds the origin of replication (ori). This chain is Replication origin-binding protein (U73), found in Homo sapiens (Human).